The primary structure comprises 438 residues: Aspartate--tRNA(Asp/Asn) ligase (438 aa).

L-aspartate is bound at residue E176. Residues 198–201 are aspartate; that stretch reads QLYK. R220 contacts L-aspartate. Residues 220–222, 228–230, and E361 each bind ATP; these read RAE and RHL. Mg(2+) is bound by residues E361 and S364. Positions 364 and 368 each coordinate L-aspartate. Residue 409 to 412 coordinates ATP; it reads GADR.

It belongs to the class-II aminoacyl-tRNA synthetase family. Type 2 subfamily. In terms of assembly, homodimer. Mg(2+) serves as cofactor.

The protein resides in the cytoplasm. The enzyme catalyses tRNA(Asx) + L-aspartate + ATP = L-aspartyl-tRNA(Asx) + AMP + diphosphate. Functionally, aspartyl-tRNA synthetase with relaxed tRNA specificity since it is able to aspartylate not only its cognate tRNA(Asp) but also tRNA(Asn). Reaction proceeds in two steps: L-aspartate is first activated by ATP to form Asp-AMP and then transferred to the acceptor end of tRNA(Asp/Asn). In Methanocaldococcus jannaschii (strain ATCC 43067 / DSM 2661 / JAL-1 / JCM 10045 / NBRC 100440) (Methanococcus jannaschii), this protein is Aspartate--tRNA(Asp/Asn) ligase.